A 359-amino-acid polypeptide reads, in one-letter code: DNA polymerase IV (359 aa).

Residues 7 to 188 (IIHIDMDAFY…IPIGKFFGVG (182 aa)) enclose the UmuC domain. Residues Asp11 and Asp106 each coordinate Mg(2+). Residue Glu107 is part of the active site.

The protein belongs to the DNA polymerase type-Y family. As to quaternary structure, monomer. Mg(2+) serves as cofactor.

It is found in the cytoplasm. It catalyses the reaction DNA(n) + a 2'-deoxyribonucleoside 5'-triphosphate = DNA(n+1) + diphosphate. Its function is as follows. Poorly processive, error-prone DNA polymerase involved in untargeted mutagenesis. Copies undamaged DNA at stalled replication forks, which arise in vivo from mismatched or misaligned primer ends. These misaligned primers can be extended by PolIV. Exhibits no 3'-5' exonuclease (proofreading) activity. May be involved in translesional synthesis, in conjunction with the beta clamp from PolIII. In Clostridium perfringens (strain ATCC 13124 / DSM 756 / JCM 1290 / NCIMB 6125 / NCTC 8237 / Type A), this protein is DNA polymerase IV.